A 592-amino-acid chain; its full sequence is MNLKTGRVLKISGPLVVAEGMEEANIYDVVKVGEKRLIGEIIEMREDRASIQVYEETAGLAPGDPVITTGEPLSVELGPGLIEAMFDGIQRPLNAIKAKAGDFITRGVEVHSLDRDRKWHFTPVKKVGDTVEAGDVIGIVQETSIVEHKIMVPYGIKGTIETIEEGDFTVVDTVAKVKDKDKVSDLIMMQKWPVRRGRPYGRKLNPVEPMITGQRVIDTFFPVTKGGTACVPGPFGSGKTVVQHQLAKWADAQIVVYIGCGERGNEMTDVLNEFPELKDPKTGEPLMKRTVLIANTSNMPVAAREASIYTGITIGEYFRDMGYSVALMADSTSRWAEALREMSGRLEEMPGDEGYPAYLGSRAADFYERAGKVLSLGSEGREGALTVIGAVSPPGGDLSEPVTQATLRIVKVFWGLDSQLAYRRHFPAINWLNSYSLYLEKISPWMDENVASDWTALRTRAMSLLQEEANLEEIVRLVGIDALSEKDRLKLEVAKSLREDYLQQNAFHEVDTYASLEKQYKMLKLVLFFYDETQRALNAGIYLKELLDLEVRDKIARAKYISEESIENIDAIFNELSEVIDQLISKGGIMNA.

233–240 (GPFGSGKT) contributes to the ATP binding site.

This sequence belongs to the ATPase alpha/beta chains family.

The catalysed reaction is ATP + H2O + 4 H(+)(in) = ADP + phosphate + 5 H(+)(out). Produces ATP from ADP in the presence of a proton gradient across the membrane. The V-type alpha chain is a catalytic subunit. The chain is V-type ATP synthase alpha chain from Clostridium botulinum (strain Loch Maree / Type A3).